Here is a 371-residue protein sequence, read N- to C-terminus: 4-hydroxy-3-methylbut-2-en-1-yl diphosphate synthase (flavodoxin) (371 aa).

Positions 271, 274, 306, and 313 each coordinate [4Fe-4S] cluster.

It belongs to the IspG family. The cofactor is [4Fe-4S] cluster.

The catalysed reaction is (2E)-4-hydroxy-3-methylbut-2-enyl diphosphate + oxidized [flavodoxin] + H2O + 2 H(+) = 2-C-methyl-D-erythritol 2,4-cyclic diphosphate + reduced [flavodoxin]. Its pathway is isoprenoid biosynthesis; isopentenyl diphosphate biosynthesis via DXP pathway; isopentenyl diphosphate from 1-deoxy-D-xylulose 5-phosphate: step 5/6. Functionally, converts 2C-methyl-D-erythritol 2,4-cyclodiphosphate (ME-2,4cPP) into 1-hydroxy-2-methyl-2-(E)-butenyl 4-diphosphate. This chain is 4-hydroxy-3-methylbut-2-en-1-yl diphosphate synthase (flavodoxin), found in Actinobacillus succinogenes (strain ATCC 55618 / DSM 22257 / CCUG 43843 / 130Z).